We begin with the raw amino-acid sequence, 314 residues long: Cytochrome f (314 aa).

The first 30 residues, 1-30 (MATNKFFKSLLFALTIAINSFGFCIQDAVA), serve as a signal peptide directing secretion. The heme site is built by tyrosine 31, cysteine 51, cysteine 54, and histidine 55. Residues 280–300 (IYGYLAFCFSVLITQIMLVLK) traverse the membrane as a helical segment.

Belongs to the cytochrome f family. In terms of assembly, the 4 large subunits of the cytochrome b6-f complex are cytochrome b6, subunit IV (17 kDa polypeptide, petD), cytochrome f and the Rieske protein, while the 4 small subunits are PetG, PetL, PetM and PetN. The complex functions as a dimer. Heme serves as cofactor.

The protein localises to the plastid. It is found in the chloroplast thylakoid membrane. Its function is as follows. Component of the cytochrome b6-f complex, which mediates electron transfer between photosystem II (PSII) and photosystem I (PSI), cyclic electron flow around PSI, and state transitions. The sequence is that of Cytochrome f from Phaeodactylum tricornutum (strain CCAP 1055/1).